A 266-amino-acid chain; its full sequence is Phosphatidylglycerol--prolipoprotein diacylglyceryl transferase (266 aa).

7 helical membrane-spanning segments follow: residues 10–30, 56–76, 92–112, 120–140, 172–192, 200–220, and 234–254; these read VAIA…LVGI, LVFW…VFFY, WEGG…TWWF, FFEL…AGRI, PSQL…LWFY, MAVS…VEFV, and WLTM…GLIA. An a 1,2-diacyl-sn-glycero-3-phospho-(1'-sn-glycerol)-binding site is contributed by R139.

This sequence belongs to the Lgt family.

It localises to the cell inner membrane. It carries out the reaction L-cysteinyl-[prolipoprotein] + a 1,2-diacyl-sn-glycero-3-phospho-(1'-sn-glycerol) = an S-1,2-diacyl-sn-glyceryl-L-cysteinyl-[prolipoprotein] + sn-glycerol 1-phosphate + H(+). The protein operates within protein modification; lipoprotein biosynthesis (diacylglyceryl transfer). Catalyzes the transfer of the diacylglyceryl group from phosphatidylglycerol to the sulfhydryl group of the N-terminal cysteine of a prolipoprotein, the first step in the formation of mature lipoproteins. The chain is Phosphatidylglycerol--prolipoprotein diacylglyceryl transferase from Ectopseudomonas mendocina (strain ymp) (Pseudomonas mendocina).